Reading from the N-terminus, the 512-residue chain is MGDRLYIFDTTLRDGEQSPGASMSKEEKIRIARQLERLGVDIIEAGFAAASPGDFDAIHAIAETIKDSTVCSLARANERDVRAAGEAIKPAARGRIHTFIATSPIHMEKKLRMSPDEVVDAAVKAVKIAREYTDDVEFSAEDALRSDIDFLARIFGEVIKAGATTLNVPDTVGYAVPRLTEAFFRELIARTPGGDKVVWSAHCHNDLGMAVANSLAAVLGGARQVECTINGLGERAGNASLEEVVMAVKTRRDVFGVDSRVDATQIVPASKLVSTVTGYPVQPNKAIVGANAFAHESGIHQDGVLKHRETYEIMSAESVGWSANRLTLGKLSGRNAFKTKLSELGIVLDSEEALNAAFARFKELADKKREIFDEDLHALVSDEMVTIEREDYKLVSLKVVSETGEPPLASIVFVEHGQEQHGESSGSGPVDAAFKAIEKVVGSGAELELYSVNAITKGTESQGEVTVRLSREGRIVNGQGADTDIIVASAKAYLSALNKLTIEEKMNAQAAA.

Residues Leu-5–Val-267 form the Pyruvate carboxyltransferase domain. 4 residues coordinate Mn(2+): Asp-14, His-202, His-204, and Asn-238. The segment at Lys-393 to Ala-512 is regulatory domain.

The protein belongs to the alpha-IPM synthase/homocitrate synthase family. LeuA type 1 subfamily. As to quaternary structure, homodimer. Mn(2+) is required as a cofactor.

The protein localises to the cytoplasm. It catalyses the reaction 3-methyl-2-oxobutanoate + acetyl-CoA + H2O = (2S)-2-isopropylmalate + CoA + H(+). It functions in the pathway amino-acid biosynthesis; L-leucine biosynthesis; L-leucine from 3-methyl-2-oxobutanoate: step 1/4. Catalyzes the condensation of the acetyl group of acetyl-CoA with 3-methyl-2-oxobutanoate (2-ketoisovalerate) to form 3-carboxy-3-hydroxy-4-methylpentanoate (2-isopropylmalate). The sequence is that of 2-isopropylmalate synthase from Chromobacterium violaceum (strain ATCC 12472 / DSM 30191 / JCM 1249 / CCUG 213 / NBRC 12614 / NCIMB 9131 / NCTC 9757 / MK).